A 220-amino-acid chain; its full sequence is Cytidylate kinase (220 aa).

Position 10-18 (10-18 (GPASSGKST)) interacts with ATP.

This sequence belongs to the cytidylate kinase family. Type 1 subfamily.

The protein localises to the cytoplasm. The catalysed reaction is CMP + ATP = CDP + ADP. It carries out the reaction dCMP + ATP = dCDP + ADP. The sequence is that of Cytidylate kinase from Lactococcus lactis subsp. cremoris (strain MG1363).